Consider the following 92-residue polypeptide: Small ribosomal subunit protein uS19 (92 aa).

It belongs to the universal ribosomal protein uS19 family.

Its function is as follows. Protein S19 forms a complex with S13 that binds strongly to the 16S ribosomal RNA. This is Small ribosomal subunit protein uS19 from Mycoplasmopsis agalactiae (strain NCTC 10123 / CIP 59.7 / PG2) (Mycoplasma agalactiae).